A 377-amino-acid polypeptide reads, in one-letter code: Serine protease inhibitor (377 aa).

An N-terminal signal peptide occupies residues 1-27; the sequence is MAALQAAVSSQLAISFFSSLIVPGAEK. The N-linked (GlcNAc...) asparagine glycan is linked to Asn301. The interval 328 to 349 is RCL; the sequence is GTEAAAATGFGVNFMSMPMQVR. Residue Asn361 is glycosylated (N-linked (GlcNAc...) asparagine).

It belongs to the serpin family.

Inhibitor of serine proteases. Inhibits chymotrypsin, cathepsin G and human neutrophil elastase. The sequence is that of Serine protease inhibitor from Cyanea capillata (Lion's mane jellyfish).